The chain runs to 1140 residues: Rho GTPase-activating protein gacF (1140 aa).

Disordered stretches follow at residues 1–145, 189–236, 455–504, 520–644, 661–700, 720–759, 773–927, and 952–1095; these read MKTH…KPSR, ESDI…IEPI, INNN…STSF, EVQQ…GLES, ESSK…DEDE, ETND…NNIS, AKVT…STLS, and TSSP…NHTN. Composition is skewed to low complexity over residues 10-26 and 35-71; these read LGGL…LKSF and QQQQ…ASSS. The stretch at 28–55 forms a coiled coil; the sequence is TEEVIHEQQQQQQQHNNNNNNNNNHQRQ. Residues 72–82 show a composition bias toward polar residues; it reads IEETSGYLSKT. Composition is skewed to low complexity over residues 83-136 and 193-222; these read SSSS…TSSP and DNGS…SSSS. Residues 234–409 form the Rho-GAP domain; the sequence is EPISQSTEDY…RLIENYHSIF (176 aa). 2 stretches are compositionally biased toward low complexity: residues 456-475 and 482-493; these read NNNS…SPYK and PKSSPKLNNRNS. Residues 494 to 504 show a composition bias toward polar residues; that stretch reads ISPKLSSSTSF. Residues 517–548 adopt a coiled-coil conformation; the sequence is ISDEVQQEQQNQQQQQDEQQDEQQDEQQDEQQ. The segment covering 520 to 533 has biased composition (low complexity); that stretch reads EVQQEQQNQQQQQD. A compositionally biased stretch (acidic residues) spans 534–549; it reads EQQDEQQDEQQDEQQD. Over residues 550 to 566 the composition is skewed to low complexity; that stretch reads EQNSNSTSINTSSSSIT. The span at 572 to 596 shows a compositional bias: polar residues; it reads STVQYLNRINTCRRPSSWTNNNRIK. Residues 597-606 show a composition bias toward basic residues; that stretch reads QQQHHHHHHQ. Low complexity predominate over residues 607 to 631; the sequence is QQQQHQQHQQQQSSSSESNSSLTSS. Polar residues-rich tracts occupy residues 632 to 641 and 672 to 684; these read PQKRLNSVNG and NRQM…NNIG. Over residues 724–759 the composition is skewed to low complexity; that stretch reads DNNNNDQINNSNSSNNIPKTTITTTTNNTTTTNNIS. A compositionally biased stretch (polar residues) spans 773–796; that stretch reads AKVTPTPTPAPMQTSSFLSTKQTN. The span at 797–822 shows a compositional bias: low complexity; that stretch reads SPSSSSSPSSTVSSTSSSPSSSLSSS. Polar residues predominate over residues 823 to 854; it reads IDNKTMSNVNYNRFQPANRTVSSPNVRNFSVP. Composition is skewed to low complexity over residues 891-914, 952-1058, and 1065-1079; these read KPKN…NSTP, TSSP…TSST, and HSNS…SSSS.

It localises to the cytoplasm. In terms of biological role, rho GTPase-activating protein involved in the signal transduction pathway. This is Rho GTPase-activating protein gacF (gacF) from Dictyostelium discoideum (Social amoeba).